The following is a 569-amino-acid chain: Methionine--tRNA ligase (569 aa).

The short motif at 11–21 (PYINGVKHLGN) is the 'HIGH' region element. Zn(2+) contacts are provided by C143, C146, C156, and C159. The short motif at 342–346 (KFSTS) is the 'KMSKS' region element. T345 contributes to the ATP binding site.

This sequence belongs to the class-I aminoacyl-tRNA synthetase family. MetG type 1 subfamily. As to quaternary structure, monomer. The cofactor is Zn(2+).

Its subcellular location is the cytoplasm. The catalysed reaction is tRNA(Met) + L-methionine + ATP = L-methionyl-tRNA(Met) + AMP + diphosphate. In terms of biological role, is required not only for elongation of protein synthesis but also for the initiation of all mRNA translation through initiator tRNA(fMet) aminoacylation. The sequence is that of Methionine--tRNA ligase from Caulobacter sp. (strain K31).